The chain runs to 391 residues: Metallophosphoesterase 1 (391 aa).

Residues 25–45 (TVVIISVLLFCEYFIYHLVIF) form a helical membrane-spanning segment. The a divalent metal cation site is built by Asp-72, Asp-114, Asn-152, His-244, His-298, and His-300. The helical transmembrane segment at 352–372 (VLATYGAAAVFLVVLILAHLE) threads the bilayer.

The protein belongs to the metallophosphoesterase superfamily. MPPE1 family. In terms of assembly, interacts with GPI-anchor proteins (via the GPI portion). Interacts with TMED10. Requires Mn(2+) as cofactor.

The protein localises to the endoplasmic reticulum-Golgi intermediate compartment membrane. Functionally, metallophosphoesterase that catalyzes the removal of a side-chain ethanolamine-phosphate (EtNP) from the second mannose of the GPI-anchor protein intermediate. Participates in the glycan remodeling steps of GPI-anchor maturation to allow an efficient transport of GPI-anchor proteins from the endoplasmic reticulum to the Golgi. This chain is Metallophosphoesterase 1, found in Cricetulus griseus (Chinese hamster).